The following is a 67-amino-acid chain: Large ribosomal subunit protein uL29 (67 aa).

This sequence belongs to the universal ribosomal protein uL29 family.

The sequence is that of Large ribosomal subunit protein uL29 from Methanosarcina barkeri (strain Fusaro / DSM 804).